Consider the following 417-residue polypeptide: 3-oxo-isoapionate-4-phosphate decarboxylase (417 aa).

K177, D179, and E180 together coordinate Mg(2+). K177 carries the post-translational modification N6-carboxylysine.

Belongs to the RuBisCO large chain family. It depends on Mg(2+) as a cofactor.

The catalysed reaction is 3-oxoisoapionate 4-phosphate + H(+) = L-erythrulose 1-phosphate + CO2. Its pathway is carbohydrate metabolism. Involved in catabolism of D-apiose. Catalyzes the decarboxylation of 3-oxo-isoapionate 4-phosphate to L-erythrulose 1-phosphate. The polypeptide is 3-oxo-isoapionate-4-phosphate decarboxylase (Rhizobium etli (strain ATCC 51251 / DSM 11541 / JCM 21823 / NBRC 15573 / CFN 42)).